Reading from the N-terminus, the 200-residue chain is LexA repressor (200 aa).

The segment at residues 28–48 is a DNA-binding region (H-T-H motif); it reads RAEIARILGFKSANAAEEHIK. Active-site for autocatalytic cleavage activity residues include Ser-118 and Lys-155.

The protein belongs to the peptidase S24 family. Homodimer.

The enzyme catalyses Hydrolysis of Ala-|-Gly bond in repressor LexA.. Its function is as follows. Represses a number of genes involved in the response to DNA damage (SOS response), including recA and lexA. In the presence of single-stranded DNA, RecA interacts with LexA causing an autocatalytic cleavage which disrupts the DNA-binding part of LexA, leading to derepression of the SOS regulon and eventually DNA repair. This Cellvibrio japonicus (strain Ueda107) (Pseudomonas fluorescens subsp. cellulosa) protein is LexA repressor.